The sequence spans 200 residues: MTIVDAKFLQSAQSVNDSPAPNVAEVAFLGRSNVGKSSILNSLTSRNGLAKSSSTPGKTQLINYFEIKFKTKNEETPYLFARFVDLPGFGYAKVAKSLKAEWNKNLTGYLQLRPNLQIFVHLIDSRHPELEIDKNVDEFLKEIKRGDQIIVNAFTKIDKLNSSELSKLKRDYPDGIFLSNLKKRGIIDLQDKITGYLFGN.

The 178-residue stretch at 22 to 199 folds into the EngB-type G domain; sequence NVAEVAFLGR…QDKITGYLFG (178 aa). Residues 30–37, 57–61, 85–88, 155–158, and 177–180 each bind GTP; these read GRSNVGKS, GKTQL, DLPG, TKID, and FLSN. Mg(2+)-binding residues include S37 and T59.

Belongs to the TRAFAC class TrmE-Era-EngA-EngB-Septin-like GTPase superfamily. EngB GTPase family. Requires Mg(2+) as cofactor.

In terms of biological role, necessary for normal cell division and for the maintenance of normal septation. The sequence is that of Probable GTP-binding protein EngB from Aliarcobacter butzleri (strain RM4018) (Arcobacter butzleri).